The primary structure comprises 294 residues: 4-hydroxy-tetrahydrodipicolinate synthase (294 aa).

Residue Thr44 participates in pyruvate binding. Tyr132 acts as the Proton donor/acceptor in catalysis. The active-site Schiff-base intermediate with substrate is Lys161. Ile206 is a pyruvate binding site.

Belongs to the DapA family. Homotetramer; dimer of dimers.

The protein resides in the cytoplasm. The catalysed reaction is L-aspartate 4-semialdehyde + pyruvate = (2S,4S)-4-hydroxy-2,3,4,5-tetrahydrodipicolinate + H2O + H(+). It participates in amino-acid biosynthesis; L-lysine biosynthesis via DAP pathway; (S)-tetrahydrodipicolinate from L-aspartate: step 3/4. Functionally, catalyzes the condensation of (S)-aspartate-beta-semialdehyde [(S)-ASA] and pyruvate to 4-hydroxy-tetrahydrodipicolinate (HTPA). This is 4-hydroxy-tetrahydrodipicolinate synthase from Thermotoga neapolitana (strain ATCC 49049 / DSM 4359 / NBRC 107923 / NS-E).